The primary structure comprises 660 residues: MDQMKEMEQLVKQLNEYSYKYYVLDQPIVSDKEYDSLYDQLIELEEKTGHVLLDSPTQRVGGEPLKKFQSHQHVALLWSLDKAKTAEELVAWEQRIKKKLESNHEIEYIVEYKFDGLTLNLTYENGELVQAATRGNGVVGESIIEQVKTIQAIPLGVDFNNKMEIQGEGLMAISTLAQYNKTAKEPLKNPRNAAAGALRNLDPKVTAKRKLGAFCYSIGYYEGMEFETHIQMIDFLKKNRFPVSNYIKSCKGIDQVIEQIREVEAGMKELDYLTDGIVIKVNDLRTREILGYTQKFPRWAIAYKFEAQEVTTKLEAVLWQVGRTGKLTPAAQLEPVEIAGVTVSRATLNNWEDIQRKKVKVGCQVWLRRSGDVIPEIMGAIEETCEEAVEIEKPQHCPACDSEIVHRGVHIFCPNSLSCKPQLVSRIVHYASRDAMDIEGFSEKTAEQLFEALGLKNIAALYELKYEDLIQLERFGDKKAKNLLDAIEESKTCKLDAFIYALGIPNVGRKTAADLANYFGDLEKIQRANYDELVVLPDIGGIVAQSIVGFFEDEKIIKSIELLLAEGIKPQHKMKNRQESIFSGKTVVVTGTLENYGRKEIQTLLEEQGAKVSGSISKNTDFVIAGDNAGSKLKKAQEILESGVETNLQILDEAAFEALL.

NAD(+) contacts are provided by residues 31-35 (DKEYD), 79-80 (SL), and glutamate 111. Residue lysine 113 is the N6-AMP-lysine intermediate of the active site. 4 residues coordinate NAD(+): arginine 134, glutamate 168, lysine 280, and lysine 304. 4 residues coordinate Zn(2+): cysteine 397, cysteine 400, cysteine 413, and cysteine 419. The region spanning 577 to 660 (RQESIFSGKT…LDEAAFEALL (84 aa)) is the BRCT domain.

It belongs to the NAD-dependent DNA ligase family. LigA subfamily. The cofactor is Mg(2+). It depends on Mn(2+) as a cofactor.

The enzyme catalyses NAD(+) + (deoxyribonucleotide)n-3'-hydroxyl + 5'-phospho-(deoxyribonucleotide)m = (deoxyribonucleotide)n+m + AMP + beta-nicotinamide D-nucleotide.. Functionally, DNA ligase that catalyzes the formation of phosphodiester linkages between 5'-phosphoryl and 3'-hydroxyl groups in double-stranded DNA using NAD as a coenzyme and as the energy source for the reaction. It is essential for DNA replication and repair of damaged DNA. This Alkaliphilus metalliredigens (strain QYMF) protein is DNA ligase.